A 321-amino-acid chain; its full sequence is Olfactory receptor 5K3 (321 aa).

Residues 1 to 25 (MNKENHSLIAEFILTGFTYHPKLKT) are Extracellular-facing. N-linked (GlcNAc...) asparagine glycosylation occurs at Asn5. The helical transmembrane segment at 26 to 46 (VLFVVFFAIYLITMVGNIGLV) threads the bilayer. Residues 47 to 56 (ALIYIEQRLH) are Cytoplasmic-facing. Residues 57–77 (TPMYIFLGNLVLMDSCCSSAI) traverse the membrane as a helical segment. Over 78–97 (TPKMLENFFSEDKRITLYEC) the chain is Extracellular. Cys97 and Cys179 are joined by a disulfide. Residues 98–118 (MAQFYFLCLAETTDCFLLAAM) form a helical membrane-spanning segment. Over 119-143 (AYDCYVAICNPLQYHTMMSKTLCIQ) the chain is Cytoplasmic. Residues 144–164 (MTAGAYLAGNLHPMIEVEFLL) form a helical membrane-spanning segment. Topologically, residues 165–196 (RLTFCGSHQINHFFCDVLPLYRLSCINPYINE) are extracellular. A helical membrane pass occupies residues 197 to 217 (LVLFILAGSIQIFTIVLVSYF). Over 218–235 (YILFTIFTMKSKEGRGKA) the chain is Cytoplasmic. A helical membrane pass occupies residues 236–256 (LSTCASHFLSVSIFCDSLLFM). The Extracellular segment spans residues 257–269 (YARPGAVNEGDKD). Residues 270–290 (IPVAIFYTLVIPLLNPFIYSL) traverse the membrane as a helical segment. Residues 291–321 (RNKEVINIMKKIMKKRKFCHILKQMSSPLAT) lie on the Cytoplasmic side of the membrane.

It belongs to the G-protein coupled receptor 1 family.

It is found in the cell membrane. In terms of biological role, odorant receptor. In Homo sapiens (Human), this protein is Olfactory receptor 5K3 (OR5K3).